A 47-amino-acid chain; its full sequence is Accessory gland peptide Acp33A (47 aa).

An N-terminal signal peptide occupies residues 1-21 (MLPSKRVPFLFTIILFLAGLG).

As to expression, main cells of accessory gland and seminal fluid.

It localises to the secreted. Functionally, responsible for physiological and behavioral changes in mated female flies. The protein is Accessory gland peptide Acp33A (Acp33A) of Drosophila melanogaster (Fruit fly).